The following is a 1031-amino-acid chain: Sister chromatid cohesion 1 protein 4 (1031 aa).

A disordered region spans residues 461-481 (TPDKEDPGTCNDDAGNNNITG). Positions 545–552 (TKRLRSAP) match the Nuclear localization signal motif. Disordered stretches follow at residues 661-703 (VEEN…EELK), 742-772 (EKLD…ADPN), and 803-835 (ELPH…VGST). Basic and acidic residues-rich tracts occupy residues 742 to 762 (EKLD…HDGE) and 803 to 825 (ELPH…RDDQ).

The protein belongs to the rad21 family. In terms of assembly, component of the cohesin complex. In terms of tissue distribution, expressed in tissues containing dividing cells such as seedlings, flower buds, flowers and inflorescence meristem tissue.

It localises to the nucleus. The protein localises to the chromosome. The protein resides in the centromere. In terms of biological role, involved in sister chromatid and centromere cohesion during mitosis. The polypeptide is Sister chromatid cohesion 1 protein 4 (SYN4) (Arabidopsis thaliana (Mouse-ear cress)).